The sequence spans 276 residues: Formamidopyrimidine-DNA glycosylase (276 aa).

Pro2 (schiff-base intermediate with DNA) is an active-site residue. Catalysis depends on Glu3, which acts as the Proton donor. The active-site Proton donor; for beta-elimination activity is Lys58. DNA-binding residues include His92, Arg111, and Arg154. The FPG-type zinc-finger motif lies at 239 to 273 (HAYQRTGDPCERCGTPIQRIVVGQRGTHFCPKCQV). The Proton donor; for delta-elimination activity role is filled by Arg263.

Belongs to the FPG family. Monomer. Zn(2+) is required as a cofactor.

It catalyses the reaction Hydrolysis of DNA containing ring-opened 7-methylguanine residues, releasing 2,6-diamino-4-hydroxy-5-(N-methyl)formamidopyrimidine.. The catalysed reaction is 2'-deoxyribonucleotide-(2'-deoxyribose 5'-phosphate)-2'-deoxyribonucleotide-DNA = a 3'-end 2'-deoxyribonucleotide-(2,3-dehydro-2,3-deoxyribose 5'-phosphate)-DNA + a 5'-end 5'-phospho-2'-deoxyribonucleoside-DNA + H(+). Functionally, involved in base excision repair of DNA damaged by oxidation or by mutagenic agents. Acts as a DNA glycosylase that recognizes and removes damaged bases. Has a preference for oxidized purines, such as 7,8-dihydro-8-oxoguanine (8-oxoG). Has AP (apurinic/apyrimidinic) lyase activity and introduces nicks in the DNA strand. Cleaves the DNA backbone by beta-delta elimination to generate a single-strand break at the site of the removed base with both 3'- and 5'-phosphates. This is Formamidopyrimidine-DNA glycosylase from Ligilactobacillus salivarius (strain UCC118) (Lactobacillus salivarius).